Consider the following 186-residue polypeptide: Protein GrpE (186 aa).

Residues 1 to 13 are compositionally biased toward polar residues; that stretch reads MSENTQPEQNQPL. Residues 1–22 are disordered; that stretch reads MSENTQPEQNQPLTGAPSPEEL.

This sequence belongs to the GrpE family. As to quaternary structure, homodimer.

The protein resides in the cytoplasm. Its function is as follows. Participates actively in the response to hyperosmotic and heat shock by preventing the aggregation of stress-denatured proteins, in association with DnaK and GrpE. It is the nucleotide exchange factor for DnaK and may function as a thermosensor. Unfolded proteins bind initially to DnaJ; upon interaction with the DnaJ-bound protein, DnaK hydrolyzes its bound ATP, resulting in the formation of a stable complex. GrpE releases ADP from DnaK; ATP binding to DnaK triggers the release of the substrate protein, thus completing the reaction cycle. Several rounds of ATP-dependent interactions between DnaJ, DnaK and GrpE are required for fully efficient folding. The polypeptide is Protein GrpE (Polaromonas sp. (strain JS666 / ATCC BAA-500)).